Consider the following 194-residue polypeptide: NADH-quinone oxidoreductase subunit B (194 aa).

The interval 1–26 (MGLTPSATKPEIAQAPQGIVDPSTGR) is disordered. Residues C73, C74, C138, and C168 each contribute to the [4Fe-4S] cluster site.

The protein belongs to the complex I 20 kDa subunit family. NDH-1 is composed of 14 different subunits. Subunits NuoB, C, D, E, F, and G constitute the peripheral sector of the complex. [4Fe-4S] cluster serves as cofactor.

The protein localises to the cell inner membrane. It carries out the reaction a quinone + NADH + 5 H(+)(in) = a quinol + NAD(+) + 4 H(+)(out). Its function is as follows. NDH-1 shuttles electrons from NADH, via FMN and iron-sulfur (Fe-S) centers, to quinones in the respiratory chain. The immediate electron acceptor for the enzyme in this species is believed to be ubiquinone. Couples the redox reaction to proton translocation (for every two electrons transferred, four hydrogen ions are translocated across the cytoplasmic membrane), and thus conserves the redox energy in a proton gradient. The polypeptide is NADH-quinone oxidoreductase subunit B (Xanthobacter autotrophicus (strain ATCC BAA-1158 / Py2)).